The following is a 256-amino-acid chain: Imidazole glycerol phosphate synthase subunit HisF (256 aa).

Residues Asp12 and Asp131 contribute to the active site.

It belongs to the HisA/HisF family. As to quaternary structure, heterodimer of HisH and HisF.

It is found in the cytoplasm. It catalyses the reaction 5-[(5-phospho-1-deoxy-D-ribulos-1-ylimino)methylamino]-1-(5-phospho-beta-D-ribosyl)imidazole-4-carboxamide + L-glutamine = D-erythro-1-(imidazol-4-yl)glycerol 3-phosphate + 5-amino-1-(5-phospho-beta-D-ribosyl)imidazole-4-carboxamide + L-glutamate + H(+). It participates in amino-acid biosynthesis; L-histidine biosynthesis; L-histidine from 5-phospho-alpha-D-ribose 1-diphosphate: step 5/9. Functionally, IGPS catalyzes the conversion of PRFAR and glutamine to IGP, AICAR and glutamate. The HisF subunit catalyzes the cyclization activity that produces IGP and AICAR from PRFAR using the ammonia provided by the HisH subunit. The polypeptide is Imidazole glycerol phosphate synthase subunit HisF (Pseudomonas syringae pv. tomato (strain ATCC BAA-871 / DC3000)).